A 238-amino-acid polypeptide reads, in one-letter code: ATP synthase subunit a (238 aa).

5 helical membrane passes run 17–37 (LSNILMITVTCVIVLLIAIIC), 75–95 (FHVLGITILMFVFVANMLGLP), 112–132 (DPIVTLTLAIMVLGLTHYYGI), 172–192 (YGNIFAGEVLLTIIATQLAHI), and 194–214 (IFVGVLAIIPAIIWQAFSLFI).

The protein belongs to the ATPase A chain family. F-type ATPases have 2 components, CF(1) - the catalytic core - and CF(0) - the membrane proton channel. CF(1) has five subunits: alpha(3), beta(3), gamma(1), delta(1), epsilon(1). CF(0) has three main subunits: a(1), b(2) and c(9-12). The alpha and beta chains form an alternating ring which encloses part of the gamma chain. CF(1) is attached to CF(0) by a central stalk formed by the gamma and epsilon chains, while a peripheral stalk is formed by the delta and b chains.

The protein localises to the cell membrane. Functionally, key component of the proton channel; it plays a direct role in the translocation of protons across the membrane. In Listeria monocytogenes serovar 1/2a (strain ATCC BAA-679 / EGD-e), this protein is ATP synthase subunit a.